The following is a 356-amino-acid chain: Histidinol-phosphate aminotransferase (356 aa).

K214 carries the post-translational modification N6-(pyridoxal phosphate)lysine.

Belongs to the class-II pyridoxal-phosphate-dependent aminotransferase family. Histidinol-phosphate aminotransferase subfamily. In terms of assembly, homodimer. Requires pyridoxal 5'-phosphate as cofactor.

It carries out the reaction L-histidinol phosphate + 2-oxoglutarate = 3-(imidazol-4-yl)-2-oxopropyl phosphate + L-glutamate. It participates in amino-acid biosynthesis; L-histidine biosynthesis; L-histidine from 5-phospho-alpha-D-ribose 1-diphosphate: step 7/9. This is Histidinol-phosphate aminotransferase from Escherichia coli O45:K1 (strain S88 / ExPEC).